The primary structure comprises 215 residues: Probable transaldolase (215 aa).

K83 serves as the catalytic Schiff-base intermediate with substrate.

This sequence belongs to the transaldolase family. Type 3B subfamily.

Its subcellular location is the cytoplasm. It carries out the reaction D-sedoheptulose 7-phosphate + D-glyceraldehyde 3-phosphate = D-erythrose 4-phosphate + beta-D-fructose 6-phosphate. The protein operates within carbohydrate degradation; pentose phosphate pathway; D-glyceraldehyde 3-phosphate and beta-D-fructose 6-phosphate from D-ribose 5-phosphate and D-xylulose 5-phosphate (non-oxidative stage): step 2/3. Its function is as follows. Transaldolase is important for the balance of metabolites in the pentose-phosphate pathway. This chain is Probable transaldolase, found in Methanococcus maripaludis (strain C7 / ATCC BAA-1331).